The sequence spans 259 residues: Putative protein-disulfide oxidoreductase RBE_1288 (259 aa).

A signal peptide spans Met-1–Glu-20. Residues Val-25–Pro-54 are disordered. Residues Ile-33–Asp-42 are compositionally biased toward polar residues. Low complexity predominate over residues Glu-43–Pro-54. The region spanning Gln-47–Glu-251 is the Thioredoxin domain. A disulfide bond links Cys-104 and Cys-107.

It belongs to the thioredoxin family. DsbA subfamily.

It is found in the periplasm. In terms of biological role, may be required for disulfide bond formation in some proteins. This chain is Putative protein-disulfide oxidoreductase RBE_1288, found in Rickettsia bellii (strain RML369-C).